The primary structure comprises 507 residues: Dihydrolipoyl dehydrogenase 1, mitochondrial (507 aa).

The N-terminal 36 residues, 1–36 (MAMASLARRKAYFLTRNLSNSPTDALRFSFSLSRGF), are a transit peptide targeting the mitochondrion. FAD-binding positions include 73 to 82 (EKRGALGGTC), Lys-91, Gly-155, and 184 to 186 (TGS). The cysteines at positions 82 and 87 are disulfide-linked. NAD(+) is bound by residues 221 to 228 (GAGYIGLE), Glu-244, Val-278, and Gly-313. Residues Asp-354 and 360-363 (MLAH) each bind FAD. His-486 serves as the catalytic Proton acceptor.

It belongs to the class-I pyridine nucleotide-disulfide oxidoreductase family. Homodimer. Part of both the glycine cleavage system composed of four proteins: P, T, L and H and of the pyruvate dehydrogenase complex containing multiple copies of three enzymatic components: pyruvate dehydrogenase (E1), dihydrolipoamide acetyltransferase (E2) and lipoamide dehydrogenase (E3). The cofactor is FAD. Post-translationally, S-nytrosylated at unknown positions. Preferentially expressed in leaves, flowers and siliques and at a lower level in roots and stems.

It is found in the mitochondrion matrix. It catalyses the reaction N(6)-[(R)-dihydrolipoyl]-L-lysyl-[protein] + NAD(+) = N(6)-[(R)-lipoyl]-L-lysyl-[protein] + NADH + H(+). Functionally, lipoamide dehydrogenase is a component of the glycine decarboxylase (GDC) or glycine cleavage system as well as of the alpha-ketoacid dehydrogenase complexes. LPD1 is probably the protein most often associated with the glycine decarboxylase complex while LPD2 is probably incorporated into alpha-ketoacid dehydrogenase complexes. In Arabidopsis thaliana (Mouse-ear cress), this protein is Dihydrolipoyl dehydrogenase 1, mitochondrial (LPD1).